Here is a 210-residue protein sequence, read N- to C-terminus: MSAALLSLVQWLSPAFPTGAFAYSHGLEWAISEGEVRDAASARRWIADVLAFGAGRTDAILLAHALRGHDPGALSDLARALAPAAERLRETEEQGAAFAATVAALTGRDLPPRPLPVALGQAAAPLGLPVAEVLALMLHAFAANLVSAAVRFVPLGQTEGQATLAALHPRIGEIAAESAEAPLDALGSAALRGDLAAMRHETQEVRIFKT.

It belongs to the UreF family. In terms of assembly, ureD, UreF and UreG form a complex that acts as a GTP-hydrolysis-dependent molecular chaperone, activating the urease apoprotein by helping to assemble the nickel containing metallocenter of UreC. The UreE protein probably delivers the nickel.

The protein resides in the cytoplasm. Functionally, required for maturation of urease via the functional incorporation of the urease nickel metallocenter. This is Urease accessory protein UreF from Cereibacter sphaeroides (strain ATCC 17023 / DSM 158 / JCM 6121 / CCUG 31486 / LMG 2827 / NBRC 12203 / NCIMB 8253 / ATH 2.4.1.) (Rhodobacter sphaeroides).